The chain runs to 607 residues: Guanine nucleotide-binding protein-like 1 (607 aa).

A compositionally biased stretch (basic residues) spans 1–14 (MPRKKPFSVKQKKK). Residues 1–81 (MPRKKPFSVK…GPRGYDPNRY (81 aa)) are disordered. A compositionally biased stretch (basic and acidic residues) spans 15–26 (QLQDKRERKRGL). Phosphoserine is present on residues Ser-32, Ser-33, and Ser-34. Thr-48 and Thr-50 each carry phosphothreonine. Ser-51 and Ser-68 each carry phosphoserine. The region spanning 178-418 (WRQLWRVLEM…LCDCPGLIFP (241 aa)) is the CP-type G domain. A GTP-binding site is contributed by 225 to 228 (NKVD). Residue Ser-324 is modified to Phosphoserine. GTP contacts are provided by residues 367–374 (GFPNVGKS) and 411–415 (DCPGL). Residues 544–607 (GRVGPAGDEE…PYALLGEGEC (64 aa)) are disordered. The segment covering 550-585 (GDEEEEEEEELSSSCEEEGEEDRDADEEGEGDEDTP) has biased composition (acidic residues). Phosphoserine is present on residues Ser-561, Ser-562, and Ser-563.

Belongs to the TRAFAC class YlqF/YawG GTPase family.

Possible regulatory or functional link with the histocompatibility cluster. This chain is Guanine nucleotide-binding protein-like 1 (Gnl1), found in Rattus norvegicus (Rat).